The sequence spans 603 residues: Variable flagella 3 (603 aa).

Residues 169-289 (GGEVSAELRR…TEDLEARDRR (121 aa)) are a coiled coil. The segment covering 288–297 (RRMNSTDRIR) has biased composition (basic and acidic residues). Disordered stretches follow at residues 288 to 526 (RRMN…PARA) and 539 to 564 (AGRG…SSKS). Over residues 337–348 (SRSNSRGRGTSS) the composition is skewed to low complexity. Basic and acidic residues predominate over residues 364 to 380 (PRFDPTEYVRQRKERES). A compositionally biased stretch (polar residues) spans 397-406 (AGTSRASSVV). Gly residues predominate over residues 486–510 (GASGGGAGGWSKFPGGGGGGVGGSG). Positions 511–520 (QRISSNSPRS) are enriched in polar residues.

This sequence belongs to the CCDC61 family.

It localises to the cytoplasm. The protein resides in the cytoskeleton. Its subcellular location is the flagellum basal body. Its function is as follows. Required for normal flagella and striated fiber formation. This Chlamydomonas reinhardtii (Chlamydomonas smithii) protein is Variable flagella 3.